We begin with the raw amino-acid sequence, 328 residues long: Phenylalanine--tRNA ligase alpha subunit (328 aa).

Glutamate 253 serves as a coordination point for Mg(2+).

It belongs to the class-II aminoacyl-tRNA synthetase family. Phe-tRNA synthetase alpha subunit type 1 subfamily. In terms of assembly, tetramer of two alpha and two beta subunits. Requires Mg(2+) as cofactor.

It is found in the cytoplasm. The enzyme catalyses tRNA(Phe) + L-phenylalanine + ATP = L-phenylalanyl-tRNA(Phe) + AMP + diphosphate + H(+). The sequence is that of Phenylalanine--tRNA ligase alpha subunit from Coxiella burnetii (strain CbuG_Q212) (Coxiella burnetii (strain Q212)).